Consider the following 252-residue polypeptide: F-box/SPRY domain-containing protein 1 (252 aa).

The F-box domain occupies Met1–His48. A B30.2/SPRY domain is found at Ile58–Leu250.

This sequence belongs to the FBXO45/Fsn family. Component of an E3 ubiquitin ligase complex composed of hiw and Fsn.

The protein localises to the synapse. It participates in protein modification; protein ubiquitination. Its function is as follows. Required in the presynaptic motoneuron to down-regulate the levels of wnd and restrain synaptic terminal growth at the neuromuscular junction (NMJ). The protein is F-box/SPRY domain-containing protein 1 of Drosophila mojavensis (Fruit fly).